The following is a 147-amino-acid chain: Heavy metal-associated isoprenylated plant protein 27 (147 aa).

The region spanning 18-82 (FQKVEIKVKM…VMHRTGKKAE (65 aa)) is the HMA domain. Residues cysteine 29 and cysteine 32 each coordinate a metal cation. The residue at position 144 (cysteine 144) is a Cysteine methyl ester. A lipid anchor (S-farnesyl cysteine) is attached at cysteine 144. Positions 145–147 (TIM) are cleaved as a propeptide — removed in mature form.

The protein belongs to the HIPP family. As to quaternary structure, interacts with UBP16. Interacts with ZHD11/HB29.

It is found in the membrane. Its function is as follows. Heavy-metal-binding protein. Binds cadmium. May be involved in cadmium transport and play a role in cadmium detoxification. In Arabidopsis thaliana (Mouse-ear cress), this protein is Heavy metal-associated isoprenylated plant protein 27.